The primary structure comprises 216 residues: Neural cell adhesion molecule L1.2 (216 aa).

Positions 1–64 (EFFIHYLRKD…QTAGARVMEV (64 aa)) constitute a Fibronectin type-III domain. Residues 1–73 (EFFIHYLRKD…VKSGFVTESW (73 aa)) are Extracellular-facing. N-linked (GlcNAc...) asparagine glycans are attached at residues N22 and N46. Residues 74–94 (FIGLISALVLLLLVLLILCFI) traverse the membrane as a helical segment. Residues 95 to 216 (KRSKGGKYSV…GLPNSAALLD (122 aa)) are Cytoplasmic-facing. Disordered stretches follow at residues 127–149 (YRSL…CEDS) and 173–216 (DESL…ALLD). The segment covering 128–139 (RSLESDNEEKRT) has biased composition (basic and acidic residues).

It belongs to the immunoglobulin superfamily. L1/neurofascin/NgCAM family. In terms of tissue distribution, expressed in many postmitotic neurons in 16-36 hours embryos. Little or no expression in the olfactory placode, the anterior lateral line/acoustic ganglia complex, the posterior lateral line ganglion, late-developing hindbrain neurons and some Rohon-Beard cells in the spinal cord.

The protein localises to the cell membrane. It localises to the cell projection. The protein resides in the growth cone. Its function is as follows. Cell adhesion molecule with an important role in the development of the nervous system. Involved in neuron-neuron adhesion, neurite fasciculation, outgrowth of neurites, etc. Binds to axonin on neurons. This chain is Neural cell adhesion molecule L1.2 (nadl1.2), found in Danio rerio (Zebrafish).